The following is a 181-amino-acid chain: Ribonuclease M5 (181 aa).

The Toprim domain occupies 3 to 86; sequence KEVIVVEGRD…AYISQEEGTK (84 aa). Glutamate 9, aspartate 55, and aspartate 57 together coordinate Mg(2+).

This sequence belongs to the ribonuclease M5 family. Requires Mg(2+) as cofactor.

It localises to the cytoplasm. It catalyses the reaction Endonucleolytic cleavage of RNA, removing 21 and 42 nucleotides, respectively, from the 5'- and 3'-termini of a 5S-rRNA precursor.. In terms of biological role, required for correct processing of both the 5' and 3' ends of 5S rRNA precursor. Cleaves both sides of a double-stranded region yielding mature 5S rRNA in one step. This Clostridium botulinum (strain Hall / ATCC 3502 / NCTC 13319 / Type A) protein is Ribonuclease M5.